The following is a 106-amino-acid chain: Large ribosomal subunit protein uL24 (106 aa).

The protein belongs to the universal ribosomal protein uL24 family. In terms of assembly, part of the 50S ribosomal subunit.

In terms of biological role, one of two assembly initiator proteins, it binds directly to the 5'-end of the 23S rRNA, where it nucleates assembly of the 50S subunit. Its function is as follows. One of the proteins that surrounds the polypeptide exit tunnel on the outside of the subunit. The polypeptide is Large ribosomal subunit protein uL24 (Acidovorax sp. (strain JS42)).